The primary structure comprises 195 residues: Holliday junction branch migration complex subunit RuvA (195 aa).

The domain I stretch occupies residues 1–63 (MIASVRGEVL…EDSQTLYGFA (63 aa)). Positions 64–138 (DSDARDLFLT…DKVGSSTSSG (75 aa)) are domain II. The interval 138 to 142 (GVAAA) is flexible linker. Residues 143–195 (GGHGIRGPVVEALVGLGFAVKQAEEATDKVLANDPEATTSSALRAALSMLGKK) are domain III.

It belongs to the RuvA family. In terms of assembly, homotetramer. Forms an RuvA(8)-RuvB(12)-Holliday junction (HJ) complex. HJ DNA is sandwiched between 2 RuvA tetramers; dsDNA enters through RuvA and exits via RuvB. An RuvB hexamer assembles on each DNA strand where it exits the tetramer. Each RuvB hexamer is contacted by two RuvA subunits (via domain III) on 2 adjacent RuvB subunits; this complex drives branch migration. In the full resolvosome a probable DNA-RuvA(4)-RuvB(12)-RuvC(2) complex forms which resolves the HJ.

It localises to the cytoplasm. The RuvA-RuvB-RuvC complex processes Holliday junction (HJ) DNA during genetic recombination and DNA repair, while the RuvA-RuvB complex plays an important role in the rescue of blocked DNA replication forks via replication fork reversal (RFR). RuvA specifically binds to HJ cruciform DNA, conferring on it an open structure. The RuvB hexamer acts as an ATP-dependent pump, pulling dsDNA into and through the RuvAB complex. HJ branch migration allows RuvC to scan DNA until it finds its consensus sequence, where it cleaves and resolves the cruciform DNA. In Mycolicibacterium gilvum (strain PYR-GCK) (Mycobacterium gilvum (strain PYR-GCK)), this protein is Holliday junction branch migration complex subunit RuvA.